The following is a 476-amino-acid chain: Sulfate adenylyltransferase subunit 1 (476 aa).

The tr-type G domain occupies 24-241 (KSLLRFLTCG…EDVDFVQEQE (218 aa)). Positions 33–40 (GSVDDGKS) are G1. Residue 33 to 40 (GSVDDGKS) participates in GTP binding. The G2 stretch occupies residues 91–95 (GITID). The G3 stretch occupies residues 112-115 (DTPG). GTP contacts are provided by residues 112 to 116 (DTPGH) and 167 to 170 (NKMD). The tract at residues 167-170 (NKMD) is G4. The tract at residues 205–207 (SAL) is G5.

The protein belongs to the TRAFAC class translation factor GTPase superfamily. Classic translation factor GTPase family. CysN/NodQ subfamily. Heterodimer composed of CysD, the smaller subunit, and CysN.

The catalysed reaction is sulfate + ATP + H(+) = adenosine 5'-phosphosulfate + diphosphate. It participates in sulfur metabolism; hydrogen sulfide biosynthesis; sulfite from sulfate: step 1/3. In terms of biological role, with CysD forms the ATP sulfurylase (ATPS) that catalyzes the adenylation of sulfate producing adenosine 5'-phosphosulfate (APS) and diphosphate, the first enzymatic step in sulfur assimilation pathway. APS synthesis involves the formation of a high-energy phosphoric-sulfuric acid anhydride bond driven by GTP hydrolysis by CysN coupled to ATP hydrolysis by CysD. The sequence is that of Sulfate adenylyltransferase subunit 1 from Photobacterium profundum (strain SS9).